A 368-amino-acid chain; its full sequence is Spore germination protein B2 (368 aa).

Transmembrane regions (helical) follow at residues 10–30 (FMQT…LTLP), 43–63 (LMIL…LPFL), 82–102 (FIGF…VCFQ), 120–140 (MAVV…GGVY), 145–165 (VYAY…MFSF), 187–207 (LFPK…LVPF), 217–237 (AVAL…LIVI), 282–302 (FACM…IFHL), 308–328 (AWLL…PKDL), and 338–358 (LGYA…LSWI).

This sequence belongs to the amino acid-polyamine-organocation (APC) superfamily. Spore germination protein (SGP) (TC 2.A.3.9) family.

The protein localises to the cell membrane. Its function is as follows. Involved in the response to the germinative mixture of L-asparagine, glucose, fructose and potassium ions (AGFK). Could be an amino acid transporter. Cannot stimulate germination in the absence of gerD and gerK gene products (fructose and glucose receptors, respectively). This is Spore germination protein B2 (gerBB) from Bacillus subtilis (strain 168).